Consider the following 360-residue polypeptide: Peptide chain release factor 1 (360 aa).

Q235 bears the N5-methylglutamine mark. A compositionally biased stretch (basic and acidic residues) spans 291–308 (ASERRNLLGTGDRSDRNR). A disordered region spans residues 291-312 (ASERRNLLGTGDRSDRNRTYNF).

The protein belongs to the prokaryotic/mitochondrial release factor family. In terms of processing, methylated by PrmC. Methylation increases the termination efficiency of RF1.

It localises to the cytoplasm. Peptide chain release factor 1 directs the termination of translation in response to the peptide chain termination codons UAG and UAA. The polypeptide is Peptide chain release factor 1 (Yersinia pseudotuberculosis serotype O:1b (strain IP 31758)).